A 141-amino-acid polypeptide reads, in one-letter code: Galactose-6-phosphate isomerase subunit LacA (141 aa).

It belongs to the LacAB/RpiB family. As to quaternary structure, heteromultimeric protein consisting of LacA and LacB.

The catalysed reaction is aldehydo-D-galactose 6-phosphate = keto-D-tagatose 6-phosphate. The protein operates within carbohydrate metabolism; D-galactose 6-phosphate degradation; D-tagatose 6-phosphate from D-galactose 6-phosphate: step 1/1. This chain is Galactose-6-phosphate isomerase subunit LacA, found in Streptococcus pneumoniae serotype 4 (strain ATCC BAA-334 / TIGR4).